The sequence spans 1476 residues: SH3 and multiple ankyrin repeat domains protein 2 (1476 aa).

Over residues Leu-66–Ser-76 the composition is skewed to polar residues. The interval Leu-66 to Phe-134 is disordered. An SH3 domain is found at Val-147–Cys-206. Val-162 carries the post-translational modification Phosphoserine. The PDZ domain maps to Thr-247–Thr-341. Ser-372 carries the post-translational modification Phosphoserine. The tract at residues Arg-391–Asn-412 is disordered. Ser-456 is subject to Phosphoserine. A Phosphothreonine modification is found at Thr-485. Residues Leu-503–Cys-533 are disordered. The span at Ile-512 to Pro-528 shows a compositional bias: pro residues. Phosphoserine is present on Ser-586. Disordered stretches follow at residues Thr-659–Arg-916, Val-946–Ala-983, and Pro-1057–Asp-1153. Residues Ser-666–Ser-678 are compositionally biased toward low complexity. The span at Val-711–Arg-722 shows a compositional bias: basic and acidic residues. The residue at position 724 (Ser-724) is a Phosphoserine. A compositionally biased stretch (gly residues) spans Leu-783–Gly-795. The span at Arg-833–Ser-846 shows a compositional bias: low complexity. 2 stretches are compositionally biased toward basic and acidic residues: residues Ala-847 to Leu-868 and Arg-899 to Arg-916. Thr-903 bears the Phosphothreonine mark. Over residues Thr-1070–Thr-1085 the composition is skewed to polar residues. Residues Val-1119–Glu-1130 show a composition bias toward basic and acidic residues. Residues Thr-1131 to Ser-1151 show a composition bias toward low complexity. The SH3-binding signature appears at Pro-1169–Pro-1175. Disordered stretches follow at residues Glu-1195–Ala-1216 and Asn-1260–Lys-1403. Residues Ile-1202–Gly-1212 show a composition bias toward pro residues. A compositionally biased stretch (low complexity) spans Ser-1291 to Val-1305. The O-linked (GlcNAc) threonine glycan is linked to Thr-1292. Polar residues predominate over residues Pro-1307–Ser-1317. A phosphoserine mark is found at Ser-1334 and Ser-1338. Over residues Leu-1364 to Pro-1375 the composition is skewed to polar residues. Residues Arg-1387–Ser-1401 show a composition bias toward low complexity. The SAM domain occupies Trp-1413–Arg-1476.

The protein belongs to the SHANK family. Is part of a complex with DLG4/PSD-95 and DLGAP1/GKAP. Interacts with CTTN/cortactin SH3 domain, DLGAP1/GKAP and alpha-latrotoxin receptor 1. Interacts with DNM2, DBNL, GRID2, BAIAP2, SLC9A3, PLCB3 and CFTR. Interacts (via proline-rich region) with PDE4D. Interacts with ABI1 (via SH3 domain). Detected in brain (at protein level), where it is highly expressed in Purkinje cells.

Its subcellular location is the apical cell membrane. It localises to the cytoplasm. The protein localises to the synapse. The protein resides in the postsynaptic density. It is found in the cell projection. Its subcellular location is the dendritic spine. It localises to the growth cone. In terms of biological role, seems to be an adapter protein in the postsynaptic density (PSD) of excitatory synapses that interconnects receptors of the postsynaptic membrane including NMDA-type and metabotropic glutamate receptors, and the actin-based cytoskeleton. May play a role in the structural and functional organization of the dendritic spine and synaptic junction. This chain is SH3 and multiple ankyrin repeat domains protein 2 (Shank2), found in Mus musculus (Mouse).